Here is a 549-residue protein sequence, read N- to C-terminus: NADH-quinone oxidoreductase subunit N (549 aa).

The next 14 membrane-spanning stretches (helical) occupy residues 26-46, 57-77, 96-116, 148-168, 171-191, 206-226, 253-273, 297-317, 321-341, 347-367, 375-395, 421-441, 466-486, and 496-516; these read LSPL…EAFV, ALAM…VGAL, PSLF…LLIA, HTEV…FTAA, FLTM…LCGL, YFLL…MVYG, LLIG…TVPF, LVAA…TTVA, PMLW…AVTQ, LLAY…VAAN, MFYL…VTLV, AASL…SGFI, SAVT…AEPA, and GILT…LGIL.

The protein belongs to the complex I subunit 2 family. NDH-1 is composed of 14 different subunits. Subunits NuoA, H, J, K, L, M, N constitute the membrane sector of the complex.

The protein resides in the cell membrane. The enzyme catalyses a quinone + NADH + 5 H(+)(in) = a quinol + NAD(+) + 4 H(+)(out). Its function is as follows. NDH-1 shuttles electrons from NADH, via FMN and iron-sulfur (Fe-S) centers, to quinones in the respiratory chain. The immediate electron acceptor for the enzyme in this species is believed to be a menaquinone. Couples the redox reaction to proton translocation (for every two electrons transferred, four hydrogen ions are translocated across the cytoplasmic membrane), and thus conserves the redox energy in a proton gradient. The sequence is that of NADH-quinone oxidoreductase subunit N from Thermobifida fusca (strain YX).